Here is a 257-residue protein sequence, read N- to C-terminus: Small ribosomal subunit protein uS3 (257 aa).

The KH type-2 domain maps to 39 to 112; the sequence is IRKFLNKKYN…EIVFNVVEVR (74 aa). The disordered stretch occupies residues 217 to 257; sequence HEELRKERQSSASSNHGGGKRRPSRKGPRRSQEDAATEGGN. Residues 234 to 245 are compositionally biased toward basic residues; the sequence is GGKRRPSRKGPR.

The protein belongs to the universal ribosomal protein uS3 family. In terms of assembly, part of the 30S ribosomal subunit. Forms a tight complex with proteins S10 and S14.

In terms of biological role, binds the lower part of the 30S subunit head. Binds mRNA in the 70S ribosome, positioning it for translation. The chain is Small ribosomal subunit protein uS3 from Haploplasma axanthum (Acholeplasma axanthum).